The primary structure comprises 452 residues: uncharacterized protein (452 aa).

7 helical membrane-spanning segments follow: residues 18 to 38 (PIIESDLEVIVIALGGYVLAK), 81 to 101 (LLPVFYVIISAASILISFLLA), 269 to 289 (IVLLLDFFSPPLYSLFIALFI), 317 to 337 (AGQVAVPMILVVLGASLATDI), 354 to 374 (VIIVCLLGRMVVVPLALLPAF), 390 to 410 (VFVVVIFLLVGSPTAIQLTQI), and 428 to 448 (SYAVFTPPNSLLLAFASLLVV).

It belongs to the auxin efflux carrier (TC 2.A.69) family.

Its subcellular location is the membrane. This is an uncharacterized protein from Schizosaccharomyces pombe (strain 972 / ATCC 24843) (Fission yeast).